A 207-amino-acid chain; its full sequence is Ribonuclease HII (207 aa).

In terms of domain architecture, RNase H type-2 spans 12-201; that stretch reads DLVAGVDEVG…VRAAWEAREG (190 aa). A divalent metal cation is bound by residues D18, E19, and D110.

It belongs to the RNase HII family. The cofactor is Mn(2+). Requires Mg(2+) as cofactor.

It is found in the cytoplasm. It carries out the reaction Endonucleolytic cleavage to 5'-phosphomonoester.. In terms of biological role, endonuclease that specifically degrades the RNA of RNA-DNA hybrids. This chain is Ribonuclease HII, found in Pseudomonas putida (strain GB-1).